A 1058-amino-acid polypeptide reads, in one-letter code: Isoleucine--tRNA ligase (1058 aa).

The 'HIGH' region motif lies at 48–58 (PYTTGHIHLGT). Positions 596-600 (KMSKS) match the 'KMSKS' region motif. Lysine 599 provides a ligand contact to ATP.

Belongs to the class-I aminoacyl-tRNA synthetase family. IleS type 2 subfamily. Monomer. Zn(2+) is required as a cofactor.

It is found in the cytoplasm. The enzyme catalyses tRNA(Ile) + L-isoleucine + ATP = L-isoleucyl-tRNA(Ile) + AMP + diphosphate. Catalyzes the attachment of isoleucine to tRNA(Ile). As IleRS can inadvertently accommodate and process structurally similar amino acids such as valine, to avoid such errors it has two additional distinct tRNA(Ile)-dependent editing activities. One activity is designated as 'pretransfer' editing and involves the hydrolysis of activated Val-AMP. The other activity is designated 'posttransfer' editing and involves deacylation of mischarged Val-tRNA(Ile). The chain is Isoleucine--tRNA ligase from Methanosarcina barkeri (strain Fusaro / DSM 804).